Here is an 882-residue protein sequence, read N- to C-terminus: Translation initiation factor IF-2 (882 aa).

Disordered stretches follow at residues 95–176 (PSVT…ASSL) and 229–289 (EHAR…SALQ). Over residues 116-133 (TKNTFSQESLNKTSPQKS) the composition is skewed to polar residues. 2 stretches are compositionally biased toward basic and acidic residues: residues 137 to 172 (KAIE…REAE) and 229 to 246 (EHAR…EGDR). The span at 247 to 262 (RSRHRGTKTTKQKKTN) shows a compositional bias: basic residues. Residues 263 to 276 (KLSESKTDREEARA) are compositionally biased toward basic and acidic residues. In terms of domain architecture, tr-type G spans 382-551 (HRAPVVTIMG…LLQAEVLELK (170 aa)). The interval 391-398 (GHVDHGKT) is G1. A GTP-binding site is contributed by 391-398 (GHVDHGKT). Residues 416 to 420 (GITQH) form a G2 region. Residues 437–440 (DTPG) are G3. Residues 437-441 (DTPGH) and 491-494 (NKID) contribute to the GTP site. A G4 region spans residues 491 to 494 (NKID). Residues 527–529 (SAK) are G5.

The protein belongs to the TRAFAC class translation factor GTPase superfamily. Classic translation factor GTPase family. IF-2 subfamily.

The protein localises to the cytoplasm. Functionally, one of the essential components for the initiation of protein synthesis. Protects formylmethionyl-tRNA from spontaneous hydrolysis and promotes its binding to the 30S ribosomal subunits. Also involved in the hydrolysis of GTP during the formation of the 70S ribosomal complex. In Hamiltonella defensa subsp. Acyrthosiphon pisum (strain 5AT), this protein is Translation initiation factor IF-2.